We begin with the raw amino-acid sequence, 431 residues long: Adenylosuccinate synthetase (431 aa).

GTP-binding positions include 13–19 and 41–43; these read GDEGKGK and GHT. Asp14 acts as the Proton acceptor in catalysis. Residues Asp14 and Gly41 each contribute to the Mg(2+) site. IMP is bound by residues 14–17, 39–42, Thr130, Arg144, Gln225, Thr240, and Arg304; these read DEGK and NAGH. His42 serves as the catalytic Proton donor. 300–306 serves as a coordination point for substrate; that stretch reads ATTGRKR. GTP contacts are provided by residues Arg306, 332-334, and 415-417; these read KLD and STG.

Belongs to the adenylosuccinate synthetase family. Homodimer. Requires Mg(2+) as cofactor.

The protein localises to the cytoplasm. It carries out the reaction IMP + L-aspartate + GTP = N(6)-(1,2-dicarboxyethyl)-AMP + GDP + phosphate + 2 H(+). Its pathway is purine metabolism; AMP biosynthesis via de novo pathway; AMP from IMP: step 1/2. In terms of biological role, plays an important role in the de novo pathway of purine nucleotide biosynthesis. Catalyzes the first committed step in the biosynthesis of AMP from IMP. The chain is Adenylosuccinate synthetase from Shewanella halifaxensis (strain HAW-EB4).